A 1049-amino-acid polypeptide reads, in one-letter code: DEAD-box ATP-dependent RNA helicase 42 (1049 aa).

Disordered regions lie at residues 1–279 (MGSS…DEID) and 299–358 (MPAA…DDEE). The span at 64 to 106 (KERDREERKAREREEREKEKERERARRREERDREERSRRREAA) shows a compositional bias: basic and acidic residues. Over residues 118 to 131 (RKRRRRSSHHHHHH) the composition is skewed to basic residues. Composition is skewed to basic and acidic residues over residues 161 to 170 (KKEEEQKQLD) and 181 to 199 (KEWQEMKRREEETKRREQE). The segment covering 201 to 214 (AGVGTSAAAAAAPA) has biased composition (low complexity). Over residues 229 to 239 (DGEESDEEGNQ) the composition is skewed to acidic residues. Over residues 262 to 272 (NGGDNANGANA) the composition is skewed to low complexity. Basic and acidic residues predominate over residues 304-313 (VDDKNDKSAK). Residues 335 to 358 (EDSDSDYADDEDDEGGSEDEDDEE) are compositionally biased toward acidic residues. The Q motif signature appears at 424–452 (KTWVQSGLTSKLLDTIKKLGFEKPMSIQA). In terms of domain architecture, Helicase ATP-binding spans 455 to 633 (LPIIMSGRDC…RKVLTKPVEI (179 aa)). 468–475 (AKTGSGKT) provides a ligand contact to ATP. A DEAD box motif is present at residues 581 to 584 (DEAD). A Helicase C-terminal domain is found at 644-805 (DITQLVEVRP…AVPEDLKGLA (162 aa)). The interval 816–868 (TEQAHGTGYGGSGFKFNEEEDEARKSAKKAQAREYGYEEDKSDSDSDEEGGVR) is disordered. Residues 855-864 (DKSDSDSDEE) show a composition bias toward acidic residues. Residues 1012-1037 (TELSVKKAKAELKRVLEDCANHALNL) are a coiled coil.

It belongs to the DEAD box helicase family. DDX46/PRP5 subfamily.

It carries out the reaction ATP + H2O = ADP + phosphate + H(+). The sequence is that of DEAD-box ATP-dependent RNA helicase 42 from Oryza sativa subsp. japonica (Rice).